The primary structure comprises 89 residues: Defensin-like protein 250 (89 aa).

An N-terminal signal peptide occupies residues 1-23; the sequence is MKLAAIFLVSCVLLSLLPSLTIA. 4 disulfide bridges follow: Cys29–Cys86, Cys40–Cys69, Cys48–Cys79, and Cys67–Cys81.

The protein belongs to the DEFL family.

It is found in the secreted. The polypeptide is Defensin-like protein 250 (SCRL8) (Arabidopsis thaliana (Mouse-ear cress)).